A 1108-amino-acid polypeptide reads, in one-letter code: Unconventional myosin-Ie (1108 aa).

Residues serine 19–glutamate 692 enclose the Myosin motor domain. Residue glycine 112–threonine 119 participates in ATP binding. The segment at proline 581–glutamate 591 is actin-binding. One can recognise an IQ domain in the interval tyrosine 695–aspartate 724. The TH1 domain occupies lysine 730 to proline 922. Positions serine 919–valine 966 are disordered. The segment covering arginine 933–asparagine 949 has biased composition (polar residues). Phosphoserine is present on residues serine 980 and serine 1002. The interval alanine 993–valine 1053 is disordered. The span at arginine 999 to glutamate 1013 shows a compositional bias: polar residues. Over residues arginine 1035–glutamine 1052 the composition is skewed to pro residues. One can recognise an SH3 domain in the interval proline 1051–isoleucine 1108.

Belongs to the TRAFAC class myosin-kinesin ATPase superfamily. Myosin family. Interacts with CALM and F-actin. Interacts (via SH3 domain) with SYNJ1, DNM1 and DNM2. Interacts with ARL14EP. Interacts with CARMIL1. In terms of tissue distribution, expressed in the immune system. In the kidney, predominantly expressed in the glomerulus, including podocytes.

Its subcellular location is the cytoplasm. The protein localises to the cytoskeleton. It localises to the cytoplasmic vesicle. It is found in the clathrin-coated vesicle. The protein resides in the cell junction. Its function is as follows. Actin-based motor molecule with ATPase activity. Unconventional myosins serve in intracellular movements. Their highly divergent tails bind to membranous compartments, which are then moved relative to actin filaments. Binds to membranes containing anionic phospholipids via its tail domain. Involved in clathrin-mediated endocytosis and intracellular movement of clathrin-coated vesicles. Required for normal morphology of the glomerular basement membrane, normal development of foot processes by kidney podocytes and normal kidney function. In dendritic cells, may control the movement of class II-containing cytoplasmic vesicles along the actin cytoskeleton by connecting them with the actin network via ARL14EP and ARL14. In Homo sapiens (Human), this protein is Unconventional myosin-Ie (MYO1E).